Consider the following 280-residue polypeptide: Virginiamycin B lyase (280 aa).

Histidine 215 lines the substrate pocket. Mg(2+) is bound at residue glutamate 254. Histidine 256 functions as the Proton acceptor in the catalytic mechanism. Glutamate 271 is a Mg(2+) binding site.

The protein belongs to the Vgb family. Monomer. Mg(2+) is required as a cofactor.

Its function is as follows. Inactivates the type B streptogramin antibiotics by linearizing the lactone ring at the ester linkage, generating a free phenylglycine carboxylate and converting the threonyl moiety into 2-amino-butenoic acid. The chain is Virginiamycin B lyase from Mycobacterium sp. (strain KMS).